The primary structure comprises 232 residues: Enolase-phosphatase E1 (232 aa).

It belongs to the HAD-like hydrolase superfamily. MasA/MtnC family. Monomer. Mg(2+) is required as a cofactor.

The enzyme catalyses 5-methylsulfanyl-2,3-dioxopentyl phosphate + H2O = 1,2-dihydroxy-5-(methylsulfanyl)pent-1-en-3-one + phosphate. It participates in amino-acid biosynthesis; L-methionine biosynthesis via salvage pathway; L-methionine from S-methyl-5-thio-alpha-D-ribose 1-phosphate: step 3/6. Its pathway is amino-acid biosynthesis; L-methionine biosynthesis via salvage pathway; L-methionine from S-methyl-5-thio-alpha-D-ribose 1-phosphate: step 4/6. In terms of biological role, bifunctional enzyme that catalyzes the enolization of 2,3-diketo-5-methylthiopentyl-1-phosphate (DK-MTP-1-P) into the intermediate 2-hydroxy-3-keto-5-methylthiopentenyl-1-phosphate (HK-MTPenyl-1-P), which is then dephosphorylated to form the acireductone 1,2-dihydroxy-3-keto-5-methylthiopentene (DHK-MTPene). This is Enolase-phosphatase E1 from Acidiphilium cryptum (strain JF-5).